A 359-amino-acid chain; its full sequence is Peptide chain release factor 1 (359 aa).

N5-methylglutamine is present on Q235.

It belongs to the prokaryotic/mitochondrial release factor family. Methylated by PrmC. Methylation increases the termination efficiency of RF1.

It localises to the cytoplasm. Its function is as follows. Peptide chain release factor 1 directs the termination of translation in response to the peptide chain termination codons UAG and UAA. The chain is Peptide chain release factor 1 from Nitrosomonas eutropha (strain DSM 101675 / C91 / Nm57).